The sequence spans 430 residues: Aspartate aminotransferase, mitochondrial (430 aa).

The transit peptide at 1-29 (MALLHSSRILSGMAAAFHPGLAAAASARA) directs the protein to the mitochondrion. Phosphothreonine is present on threonine 48. Lysine 59 is modified (N6-acetyllysine). Substrate is bound at residue glycine 65. Lysine 73 carries the N6-acetyllysine; alternate modification. Lysine 73 bears the N6-succinyllysine; alternate mark. The residue at position 82 (lysine 82) is an N6-acetyllysine. N6-acetyllysine; alternate is present on lysine 90. Residue lysine 90 is modified to N6-succinyllysine; alternate. 3'-nitrotyrosine; alternate is present on tyrosine 96. The residue at position 96 (tyrosine 96) is a Phosphotyrosine; alternate. Lysine 107 and lysine 122 each carry N6-acetyllysine; alternate. An N6-succinyllysine; alternate mark is found at lysine 107 and lysine 122. The residue at position 143 (serine 143) is a Phosphoserine. Lysine 159 bears the N6-acetyllysine; alternate mark. An N6-succinyllysine; alternate modification is found at lysine 159. A substrate-binding site is contributed by tryptophan 162. Lysine 185 carries the post-translational modification N6-acetyllysine; alternate. The residue at position 185 (lysine 185) is an N6-succinyllysine; alternate. A substrate-binding site is contributed by asparagine 215. N6-succinyllysine is present on lysine 227. Lysine 234 carries the post-translational modification N6-acetyllysine. N6-acetyllysine; alternate is present on residues lysine 279 and lysine 296. Position 279 is an N6-(pyridoxal phosphate)lysine; alternate (lysine 279). At lysine 296 the chain carries N6-succinyllysine; alternate. Lysine 302 is modified (N6-acetyllysine). At lysine 309 the chain carries N6-acetyllysine; alternate. N6-succinyllysine; alternate is present on lysine 309. At arginine 313 the chain carries Asymmetric dimethylarginine. Lysine 338 carries the N6-acetyllysine; alternate modification. Residue lysine 338 is modified to N6-succinyllysine; alternate. An N6-acetyllysine modification is found at lysine 345. Lysine 363 is subject to N6-acetyllysine; alternate. N6-succinyllysine; alternate is present on lysine 363. N6-acetyllysine is present on residues lysine 364 and lysine 387. N6-acetyllysine; alternate is present on residues lysine 396 and lysine 404. N6-succinyllysine; alternate is present on residues lysine 396 and lysine 404. Arginine 407 serves as a coordination point for substrate.

The protein belongs to the class-I pyridoxal-phosphate-dependent aminotransferase family. As to quaternary structure, homodimer. It depends on pyridoxal 5'-phosphate as a cofactor. Post-translationally, acetylation of Lys-296, Lys-345 and Lys-363 is observed in liver mitochondria from fasted mice but not from fed mice. As to expression, detected in brain (at protein level).

Its subcellular location is the mitochondrion matrix. The protein resides in the cell membrane. It catalyses the reaction L-aspartate + 2-oxoglutarate = oxaloacetate + L-glutamate. The catalysed reaction is L-kynurenine + 2-oxoglutarate = kynurenate + L-glutamate + H2O. Its function is as follows. Catalyzes the irreversible transamination of the L-tryptophan metabolite L-kynurenine to form kynurenic acid (KA). As a member of the malate-aspartate shuttle, it has a key role in the intracellular NAD(H) redox balance. Is important for metabolite exchange between mitochondria and cytosol, and for amino acid metabolism. Facilitates cellular uptake of long-chain free fatty acids. In Mus musculus (Mouse), this protein is Aspartate aminotransferase, mitochondrial (Got2).